Here is a 338-residue protein sequence, read N- to C-terminus: Ankyrin-repeat domain containing transcription coregulator asaA (338 aa).

The segment covering 1–10 (MGAPHEEIQA) has biased composition (basic and acidic residues). Disordered regions lie at residues 1 to 70 (MGAP…LRST) and 112 to 137 (ASSVSPSSSAGPLSSSPSPSQRPFID). Positions 11–33 (LKRRREQNRLAQRRRRDNVRRRL) are enriched in basic residues. Polar residues predominate over residues 42-70 (SPASASQTSLCSSTDSRVTLNPHQSLRST). Over residues 112-130 (ASSVSPSSSAGPLSSSPSP) the composition is skewed to low complexity. ANK repeat units follow at residues 235–264 (RWTTALHMAVSQGNFSVMRLLLSYGADPNA), 268–297 (EGATALHVGVMNGNYTMVAELLQRGADPTL), and 301–330 (AGWLPLHQAVHAGDEGCVRVLLEADQPVDY).

It functions in the pathway secondary metabolite biosynthesis. Functionally, transcription coregulator involved in regulation of gene cluster that mediates the biosynthesis of aspergillic acid, a hydroxamic acid-containing pyrazinone with aliphatic side chains that originates from leucine (Leu) and isoleucine (Ile). Aspergillic acid has antibiotic properties and was shown to be lethal to mice. The protein is Ankyrin-repeat domain containing transcription coregulator asaA of Aspergillus flavus (strain ATCC 200026 / FGSC A1120 / IAM 13836 / NRRL 3357 / JCM 12722 / SRRC 167).